The chain runs to 348 residues: Lipoyl synthase (348 aa).

Residues 1–45 (MSESAKPRITSGSKFRNEHGFSAIKDGVKRSSSNTEGKSLERKPK) are disordered. Residues Cys73, Cys78, Cys84, Cys99, Cys103, Cys106, and Ser314 each coordinate [4Fe-4S] cluster. In terms of domain architecture, Radical SAM core spans 85-303 (WTNGTATIMV…RDIGLEKGFM (219 aa)).

Belongs to the radical SAM superfamily. Lipoyl synthase family. [4Fe-4S] cluster serves as cofactor.

The protein localises to the cytoplasm. It catalyses the reaction [[Fe-S] cluster scaffold protein carrying a second [4Fe-4S](2+) cluster] + N(6)-octanoyl-L-lysyl-[protein] + 2 oxidized [2Fe-2S]-[ferredoxin] + 2 S-adenosyl-L-methionine + 4 H(+) = [[Fe-S] cluster scaffold protein] + N(6)-[(R)-dihydrolipoyl]-L-lysyl-[protein] + 4 Fe(3+) + 2 hydrogen sulfide + 2 5'-deoxyadenosine + 2 L-methionine + 2 reduced [2Fe-2S]-[ferredoxin]. It participates in protein modification; protein lipoylation via endogenous pathway; protein N(6)-(lipoyl)lysine from octanoyl-[acyl-carrier-protein]: step 2/2. Catalyzes the radical-mediated insertion of two sulfur atoms into the C-6 and C-8 positions of the octanoyl moiety bound to the lipoyl domains of lipoate-dependent enzymes, thereby converting the octanoylated domains into lipoylated derivatives. The chain is Lipoyl synthase from Marinobacter nauticus (strain ATCC 700491 / DSM 11845 / VT8) (Marinobacter aquaeolei).